The following is a 298-amino-acid chain: Glycine--tRNA ligase alpha subunit (298 aa).

This sequence belongs to the class-II aminoacyl-tRNA synthetase family. As to quaternary structure, tetramer of two alpha and two beta subunits.

The protein resides in the cytoplasm. The enzyme catalyses tRNA(Gly) + glycine + ATP = glycyl-tRNA(Gly) + AMP + diphosphate. The sequence is that of Glycine--tRNA ligase alpha subunit from Helicobacter pylori (strain P12).